The primary structure comprises 209 residues: Small ribosomal subunit protein uS4 (209 aa).

Residues 98–159 (RRLDSAVYRL…KSRKITRIND (62 aa)) form the S4 RNA-binding domain.

Belongs to the universal ribosomal protein uS4 family. In terms of assembly, part of the 30S ribosomal subunit. Contacts protein S5. The interaction surface between S4 and S5 is involved in control of translational fidelity.

Functionally, one of the primary rRNA binding proteins, it binds directly to 16S rRNA where it nucleates assembly of the body of the 30S subunit. Its function is as follows. With S5 and S12 plays an important role in translational accuracy. This Syntrophotalea carbinolica (strain DSM 2380 / NBRC 103641 / GraBd1) (Pelobacter carbinolicus) protein is Small ribosomal subunit protein uS4.